We begin with the raw amino-acid sequence, 262 residues long: MSGPAGLAYLDRRERVLKLGESFEKQPRCAFHTVRYDFKPASIDTSCEGNLEVGKGEQVTITLPNIEGSTPPVTVFKGSKRPYLKECILIINHDTGECRLEKLSSNITVKKTRVEGSSRIQYRLEQQQQQMWNLPRTSNLVQHSPSEEKMSPTSLMDDIERELKAEASLMDQMSSCDSSSDSKSSSSSSSEDSSSDSEDDDQFSPLGPRKYSSEHPSMSAGPQYRTSEADATCHRLQDHSTLLMSTLRSDLQLSESESDSED.

The segment at 17–104 (LKLGESFEKQ…TGECRLEKLS (88 aa)) is necessary for interaction with ELL. Residues Ser146, Ser151, and Ser154 each carry the phosphoserine modification. The interval 170-237 (MDQMSSCDSS…EADATCHRLQ (68 aa)) is disordered. The span at 174–192 (SSCDSSSDSKSSSSSSSED) shows a compositional bias: low complexity. The segment at 177-262 (DSSSDSKSSS…LSESESDSED (86 aa)) is necessary for transactivation activity. Positions 193–202 (SSSDSEDDDQ) are enriched in acidic residues. Residues 227–237 (SEADATCHRLQ) show a composition bias toward basic and acidic residues. The tract at residues 248–262 (RSDLQLSESESDSED) is necessary for interaction with TCEA1 and transactivation activity.

The protein belongs to the EAF family. As to quaternary structure, component of the super elongation complex (SEC), at least composed of EAF1, EAF2, CDK9, MLLT3/AF9, AFF (AFF1 or AFF4), the P-TEFb complex and ELL (ELL, ELL2 or ELL3). Interacts with ELL and ELL2. Isoform 1 and isoform 2 interact with TCEA1. Isoform 1 is expressed in ovary, uterus, mammary glands, brain, spleen, liver, lung, thymus, kidney, skeletal muscle, skin and testis. Isoform 2 is expressed in kidney.

Its subcellular location is the nucleus speckle. In terms of biological role, acts as a transcriptional transactivator of ELL and ELL2 elongation activities. Acts as a transcriptional transactivator of TCEA1 elongation activity. This chain is ELL-associated factor 2 (Eaf2), found in Mus musculus (Mouse).